A 455-amino-acid polypeptide reads, in one-letter code: Probable pectate lyase 6 (455 aa).

The first 25 residues, 1 to 25 (MVNLGSYVFVFVALSLTVVVPSVQA), serve as a signal peptide directing secretion. N-linked (GlcNAc...) asparagine glycans are attached at residues N55 and N75. Positions 247, 271, and 275 each coordinate Ca(2+). Residue R327 is part of the active site.

The protein belongs to the polysaccharide lyase 1 family. The cofactor is Ca(2+).

The catalysed reaction is Eliminative cleavage of (1-&gt;4)-alpha-D-galacturonan to give oligosaccharides with 4-deoxy-alpha-D-galact-4-enuronosyl groups at their non-reducing ends.. It functions in the pathway glycan metabolism; pectin degradation; 2-dehydro-3-deoxy-D-gluconate from pectin: step 2/5. The chain is Probable pectate lyase 6 from Arabidopsis thaliana (Mouse-ear cress).